Consider the following 237-residue polypeptide: uncharacterized protein (237 aa).

The Response regulatory domain maps to 3-116 (SALLIDDERF…RLAKTVQRLL (114 aa)). 4-aspartylphosphate is present on Asp54. An HTH LytTR-type domain is found at 135–236 (IPCTGLNRIV…LKELKEMLGF (102 aa)).

This is an uncharacterized protein from Vibrio cholerae serotype O1 (strain ATCC 39315 / El Tor Inaba N16961).